Reading from the N-terminus, the 179-residue chain is Large ribosomal subunit protein uL10 (179 aa).

Positions K137–E179 are binds L7/L12 dimers.

Part of the ribosomal stalk of the 50S ribosomal subunit. The N-terminus interacts with L11 and 23S rRNA to form the base of the stalk. The C-terminus forms an elongated spine to which 3 L12 dimers bind in a sequential fashion forming a heptameric L10(L12)2(L12)2(L12)2 complex.

Forms part of the ribosomal stalk, playing a central role in the interaction of the ribosome with GTP-bound translation factors (such as IF-2, EF-Tu, EF-G and RF3). The chain is Large ribosomal subunit protein uL10 (rplJ) from Thermotoga maritima (strain ATCC 43589 / DSM 3109 / JCM 10099 / NBRC 100826 / MSB8).